An 88-amino-acid polypeptide reads, in one-letter code: Phosphocarrier protein HPr (88 aa).

The region spanning 1–88 (MAQKTFTVTA…DTMSKEGLGE (88 aa)) is the HPr domain. The residue at position 12 (serine 12) is a Phosphoserine. The Pros-phosphohistidine intermediate role is filled by histidine 15. Phosphoserine; by HPrK/P is present on serine 46.

The protein belongs to the HPr family.

The protein localises to the cytoplasm. Phosphorylation on Ser-46 inhibits the phosphoryl transfer from enzyme I to HPr. In terms of biological role, general (non sugar-specific) component of the phosphoenolpyruvate-dependent sugar phosphotransferase system (sugar PTS). This major carbohydrate active-transport system catalyzes the phosphorylation of incoming sugar substrates concomitantly with their translocation across the cell membrane. The phosphoryl group from phosphoenolpyruvate (PEP) is transferred to the phosphoryl carrier protein HPr by enzyme I. Phospho-HPr then transfers it to the PTS EIIA domain. Its function is as follows. P-Ser-HPr interacts with the catabolite control protein A (CcpA), forming a complex that binds to DNA at the catabolite response elements cre, operator sites preceding a large number of catabolite-regulated genes. Thus, P-Ser-HPr is a corepressor in carbon catabolite repression (CCR), a mechanism that allows bacteria to coordinate and optimize the utilization of available carbon sources. P-Ser-HPr also plays a role in inducer exclusion, in which it probably interacts with several non-PTS permeases and inhibits their transport activity. This is Phosphocarrier protein HPr (ptsH) from Priestia megaterium (Bacillus megaterium).